Consider the following 330-residue polypeptide: Adenylate isopentenyltransferase 5, chloroplastic (330 aa).

The N-terminal 39 residues, 1-39 (MKPCMTALRQVIQPLSLNFQGNMVDVPFFRRKDKVVFVM), are a transit peptide targeting the chloroplast. An ATP-binding site is contributed by 40–47 (GATGTGKS).

The protein belongs to the IPP transferase family. As to expression, expressed in root primordia, columella root caps, upper part of young inflorescences, and fruit abscission zones.

It localises to the plastid. The protein resides in the chloroplast. It carries out the reaction dimethylallyl diphosphate + ADP = N(6)-(dimethylallyl)adenosine 5'-diphosphate + diphosphate. It catalyses the reaction dimethylallyl diphosphate + ATP = N(6)-(dimethylallyl)adenosine 5'-triphosphate + diphosphate. Functionally, involved in cytokinin biosynthesis. Catalyzes the transfer of an isopentenyl group from dimethylallyl diphosphate (DMAPP) to ATP and ADP. In Arabidopsis thaliana (Mouse-ear cress), this protein is Adenylate isopentenyltransferase 5, chloroplastic (IPT5).